Reading from the N-terminus, the 133-residue chain is Crossover junction endodeoxyribonuclease Hjc (133 aa).

Mg(2+) is bound at residue E12. The active site involves S32. Mg(2+)-binding residues include D36 and E49.

The protein belongs to the Holliday junction resolvase Hjc family. Homodimer. Mg(2+) serves as cofactor.

The catalysed reaction is Endonucleolytic cleavage at a junction such as a reciprocal single-stranded crossover between two homologous DNA duplexes (Holliday junction).. A structure-specific endonuclease that resolves Holliday junction (HJ) intermediates during genetic recombination. Cleaves 4-way DNA junctions introducing paired nicks in opposing strands, leaving a 5'-terminal phosphate and a 3'-terminal hydroxyl group that are subsequently ligated to produce recombinant products. This is Crossover junction endodeoxyribonuclease Hjc from Methanocaldococcus jannaschii (strain ATCC 43067 / DSM 2661 / JAL-1 / JCM 10045 / NBRC 100440) (Methanococcus jannaschii).